A 471-amino-acid chain; its full sequence is Serine/threonine-protein kinase AtPK2/AtPK19 (471 aa).

The interval 1-21 is disordered; it reads MVSSQCSVANKNQTGKPFQKH. The 256-residue stretch at 140–395 folds into the Protein kinase domain; sequence FEVLKVVGQG…AEEIKKHKWF (256 aa). ATP contacts are provided by residues 146 to 154 and K169; that span reads VGQGAFGKV. The active-site Proton acceptor is the D263. Positions 281–307 are activation loop; that stretch reads DFGLAKEFEENTRSNSMCGTTEYMAPE. Position 296 is a phosphoserine; by PDPK1 (S296). The region spanning 396-466 is the AGC-kinase C-terminal domain; it reads KAINWKKLEA…VRPPHSFLHR (71 aa). T455 carries the post-translational modification Phosphothreonine; by TOR.

Belongs to the protein kinase superfamily. AGC Ser/Thr protein kinase family. S6 kinase subfamily. In terms of assembly, interacts with TAP46. Binds to MRF1. Undergoes serine-specific autophosphorylation. Phosphorylated at Thr-455 by TOR.

It carries out the reaction L-seryl-[protein] + ATP = O-phospho-L-seryl-[protein] + ADP + H(+). The catalysed reaction is L-threonyl-[protein] + ATP = O-phospho-L-threonyl-[protein] + ADP + H(+). Activated by PDK1. In terms of biological role, downstream effector of TOR signaling pathway. May be involved in adaptation of plant to cold or high-salt conditions. Mediates the phosphorylation of MRFs (e.g. MRF1). The chain is Serine/threonine-protein kinase AtPK2/AtPK19 (ATPK2) from Arabidopsis thaliana (Mouse-ear cress).